The sequence spans 294 residues: tRNA pseudouridine synthase B (294 aa).

Asp39 serves as the catalytic Nucleophile.

The protein belongs to the pseudouridine synthase TruB family. Type 1 subfamily.

The catalysed reaction is uridine(55) in tRNA = pseudouridine(55) in tRNA. Its function is as follows. Responsible for synthesis of pseudouridine from uracil-55 in the psi GC loop of transfer RNAs. The polypeptide is tRNA pseudouridine synthase B (Streptococcus pyogenes serotype M6 (strain ATCC BAA-946 / MGAS10394)).